The sequence spans 570 residues: MLTDIEISRQTKHRPITQIAEKFGITSSELVPFGDAKAKVKLSILKRVDDNLEGKLVIVTAVTPTPFGEGKTVTSIGLTQGLNALGKKACACIRQPSMGPVFGIKGGAAGGGYSQVVPMEELNLHLTGDIHAVSSAHNLAAAAIDARLFHESRMTADEYREQSGQAPLNIDPEKILWRRVVDHNERSLRNITVGLGANNGPIHDSGFDITAASELMAILALSLDLKDMRRRIGKLVLALDSLGQPITAETLGVAGAMTVIMSDAIEPTLMQTLTGDPCLIHAGPFANIAHGNSSIIADRIALKLADIVVTEGGFGSDMGFEKFCNIKTRVSGKTPDAAVVVVTLKALKANSGIDSQNDINRPDMARLQVGFANLKWHIDNVSQYGAPVVVAINRFPTDTFEELTWLKAKVLETAAFGCEICEGFSQGAKGAEALARVVVSATEQKSDFKFLYQLDESIESKLLTIAEAGYGAAGIKLSPDAKIQLQEINSMGLDKLAVCVAKTPLSISHEPKVKGVPTDFELPITQLKINAGAGFITALVGKVMTMPGLGIKPGYLNVDINEDDEIVGLA.

Thr-65 to Thr-72 serves as a coordination point for ATP.

The protein belongs to the formate--tetrahydrofolate ligase family.

It catalyses the reaction (6S)-5,6,7,8-tetrahydrofolate + formate + ATP = (6R)-10-formyltetrahydrofolate + ADP + phosphate. It functions in the pathway one-carbon metabolism; tetrahydrofolate interconversion. In Shewanella sediminis (strain HAW-EB3), this protein is Formate--tetrahydrofolate ligase.